Reading from the N-terminus, the 555-residue chain is Phosphomethylpyrimidine synthase (555 aa).

Residues 78-104 are disordered; the sequence is VRDRWGFDNGSAESTKGELSMSERKPR. Residues asparagine 191, methionine 220, tyrosine 249, histidine 285, 305–307, 346–349, and glutamate 385 contribute to the substrate site; these read SRG and DALR. Histidine 389 contacts Zn(2+). Tyrosine 412 contacts substrate. Residue histidine 453 participates in Zn(2+) binding. Residues cysteine 535, cysteine 538, and cysteine 543 each coordinate [4Fe-4S] cluster.

Belongs to the ThiC family. [4Fe-4S] cluster is required as a cofactor.

It carries out the reaction 5-amino-1-(5-phospho-beta-D-ribosyl)imidazole + S-adenosyl-L-methionine = 4-amino-2-methyl-5-(phosphooxymethyl)pyrimidine + CO + 5'-deoxyadenosine + formate + L-methionine + 3 H(+). It functions in the pathway cofactor biosynthesis; thiamine diphosphate biosynthesis. Functionally, catalyzes the synthesis of the hydroxymethylpyrimidine phosphate (HMP-P) moiety of thiamine from aminoimidazole ribotide (AIR) in a radical S-adenosyl-L-methionine (SAM)-dependent reaction. The polypeptide is Phosphomethylpyrimidine synthase (Chlorobaculum parvum (strain DSM 263 / NCIMB 8327) (Chlorobium vibrioforme subsp. thiosulfatophilum)).